The chain runs to 271 residues: (+)-cis,trans-nepetalactol synthase NEPS1 (271 aa).

NAD(+) contacts are provided by residues 24-30, 49-51, 72-73, and Asn99; these read GGASGIG, DIQ, and DV. Thr154 and Tyr167 together coordinate substrate. NAD(+)-binding positions include Tyr167, Lys171, and 200-205; that span reads VLTPLA. Catalysis depends on Tyr167, which acts as the Proton acceptor.

This sequence belongs to the short-chain dehydrogenases/reductases (SDR) family.

The catalysed reaction is (S)-8-oxocitronellyl enol = cis-trans-nepetalactol. It carries out the reaction cis-cis-nepetalactol + NAD(+) = cis-cis-nepetalactone + NADH + H(+). It catalyses the reaction cis-trans-nepetalactol + NAD(+) = cis-trans-nepetalactone + NADH + H(+). Bifunctional enzyme that possesses cyclase and dehydrogenase activities. Functions as a non-oxidoreductive cyclase to promote the formation of cis-trans-nepetalactol. Functions as dehydrogenase to oxidize cis-cis-nepetalactol and cis-trans-nepetalactol into nepetalactones, metabolites that are both insect-repellent and have euphoric effect in cats. Binds NAD(+) as classical short-chain dehydrogenase/reductase (SDR), but does not utilize it for its redox-neutral cyclase activity. The chain is (+)-cis,trans-nepetalactol synthase NEPS1 from Nepeta racemosa (Catmint).